The primary structure comprises 362 residues: 45 kDa calcium-binding protein (362 aa).

An N-terminal signal peptide occupies residues 1-36 (MVWPWVAMASRWGPLIGLAPCCLWLLGAVLLMDASA). N40 carries N-linked (GlcNAc...) asparagine glycosylation. 2 EF-hand domains span residues 98-133 (RSRR…KTAE) and 137-172 (EAME…SKGH). The residue at position 99 (S99) is a Phosphoserine. 10 residues coordinate Ca(2+): D111, N113, D115, K117, E122, D150, D152, D154, H156, and E161. The residue at position 193 (T193) is a Phosphothreonine. EF-hand domains follow at residues 197–232 (LENL…HSRG), 233–268 (MLRF…TVEN), 278–313 (WVKD…MNEY), and 314–349 (NALN…FTGS). D213 serves as a coordination point for Ca(2+). T217 is modified (phosphothreonine). Residues E220, D246, D248, D250, Q252, and E257 each contribute to the Ca(2+) site. A Phosphothreonine modification is found at T265. Ca(2+) contacts are provided by D291, N293, and D295. T299 is modified (phosphothreonine). The Ca(2+) site is built by E302, D327, N329, N331, H333, and E338. The tract at residues 309–362 (PMNEYNALNEAKQMIAVADENQNHHLEPEEVLKYSEFFTGSKLVDYARSVHEEF) is necessary for intracellular retention in Golgi apparatus lumen.

The protein belongs to the CREC family. In terms of assembly, isoform 5 interacts with STXBP1; the interaction is enhanced in presence of calcium. Isoform 5 interacts with STX3. In terms of tissue distribution, ubiquitous. Isoform 5 is expressed in pancreas.

The protein localises to the golgi apparatus lumen. The protein resides in the cytoplasm. It localises to the cell membrane. Its subcellular location is the cell projection. It is found in the bleb. Its function is as follows. May regulate calcium-dependent activities in the endoplasmic reticulum lumen or post-ER compartment. Isoform 5 may be involved in the exocytosis of zymogens by pancreatic acini. In Homo sapiens (Human), this protein is 45 kDa calcium-binding protein (SDF4).